We begin with the raw amino-acid sequence, 449 residues long: Adenylosuccinate synthetase isozyme 1 A (449 aa).

A compositionally biased stretch (polar residues) spans 1 to 10 (MSHKSCYTNP). A disordered region spans residues 1–22 (MSHKSCYTNPGTGGKRPRNDKG). GTP contacts are provided by residues 34–40 (GDEGKGK) and 62–64 (GHT). Asp35 functions as the Proton acceptor in the catalytic mechanism. Mg(2+)-binding residues include Asp35 and Gly62. Asp35 provides a ligand contact to substrate. Residues 35–38 (DEGK), 60–63 (NAGH), Thr155, Arg169, Asn248, Thr263, and Arg327 each bind IMP. His63 functions as the Proton donor in the catalytic mechanism. A substrate-binding site is contributed by 323 to 329 (VTTGRKR). GTP is bound by residues Arg329, 355 to 357 (KLD), and 437 to 440 (GVGK).

This sequence belongs to the adenylosuccinate synthetase family. In terms of assembly, homodimer. The cofactor is Mg(2+).

The protein resides in the cytoplasm. It catalyses the reaction IMP + L-aspartate + GTP = N(6)-(1,2-dicarboxyethyl)-AMP + GDP + phosphate + 2 H(+). It participates in purine metabolism; AMP biosynthesis via de novo pathway; AMP from IMP: step 1/2. Its function is as follows. Component of the purine nucleotide cycle (PNC), which interconverts IMP and AMP to regulate the nucleotide levels in various tissues, and which contributes to glycolysis and ammoniagenesis. Catalyzes the first committed step in the biosynthesis of AMP from IMP. This is Adenylosuccinate synthetase isozyme 1 A (adss1a) from Salmo salar (Atlantic salmon).